A 622-amino-acid polypeptide reads, in one-letter code: Dynein axonemal assembly factor 1 (622 aa).

The segment covering 1 to 11 (MHPEVSEQQAD) has biased composition (polar residues). Residues 1 to 80 (MHPEVSEQQA…ARNDRDDRGP (80 aa)) form a disordered region. Positions 32-42 (VRKEEINETKE) are enriched in basic and acidic residues. Residues 48–59 (STTSCQSQKQQS) show a composition bias toward low complexity. The segment covering 62 to 80 (SRLECRSGYARNDRDDRGP) has biased composition (basic and acidic residues). 6 LRR repeats span residues 101 to 123 (ALNDTLYLHFKGFDRIENLEEYT), 124 to 145 (GLRCLWLECNGIQRIENLQAQS), 146 to 167 (ELRCLFLQVNLLHKIENLEPLQ), 168 to 189 (KLDALNLSNNYIKTIENLSCLP), 190 to 211 (VLNTLQMAHNRLETVADIQHLG), and 215 to 236 (RLCVLDLSHNMLSDPEILSVLE). Positions 249 to 288 (NPVTKHIPNYRRTVTVRLKQLTYLDDRPVFPKDRACAEAW) constitute an LRRCT domain. Over residues 326-336 (EERKKARDKGE) the composition is skewed to basic and acidic residues. The disordered stretch occupies residues 326–363 (EERKKARDKGETPLPDSEESSSTSPEAQEKPPLGETQE). Residues 337 to 351 (TPLPDSEESSSTSPE) are compositionally biased toward low complexity. Residues Ser-349, Ser-464, and Ser-487 each carry the phosphoserine modification. Disordered regions lie at residues 481 to 505 (SSLSDDSDPELNDSSLPMLEHTPTG) and 535 to 622 (TATT…FGLD). 2 stretches are compositionally biased toward polar residues: residues 535–552 (TATTEVETQGQVFSTTRP) and 568–578 (EPNQSLPAQSS).

Belongs to the DNAAF1 family.

It is found in the cell projection. The protein resides in the cilium. Cilium-specific protein required for the stability of the ciliary architecture. Plays a role in cytoplasmic preassembly of dynein arms. Involved in regulation of microtubule-based cilia and actin-based brush border microvilli. The protein is Dynein axonemal assembly factor 1 (Dnaaf1) of Peromyscus californicus (California mouse).